A 904-amino-acid chain; its full sequence is Leucine--tRNA ligase (904 aa).

The short motif at 49–59 is the 'HIGH' region element; the sequence is PYPSGDLHIGH. A 'KMSKS' region motif is present at residues 663–667; it reads TMSKS. An ATP-binding site is contributed by Lys666.

Belongs to the class-I aminoacyl-tRNA synthetase family.

It is found in the cytoplasm. The catalysed reaction is tRNA(Leu) + L-leucine + ATP = L-leucyl-tRNA(Leu) + AMP + diphosphate. The chain is Leucine--tRNA ligase from Roseiflexus castenholzii (strain DSM 13941 / HLO8).